Reading from the N-terminus, the 902-residue chain is Phosphoenolpyruvate carboxylase (902 aa).

Residue His-132 is part of the active site. The segment at 327-346 is disordered; sequence DALERPEKTAGKKSSKRTPY. Residue Lys-561 is part of the active site.

Belongs to the PEPCase type 1 family. Mg(2+) serves as cofactor.

It catalyses the reaction oxaloacetate + phosphate = phosphoenolpyruvate + hydrogencarbonate. Its function is as follows. Forms oxaloacetate, a four-carbon dicarboxylic acid source for the tricarboxylic acid cycle. This chain is Phosphoenolpyruvate carboxylase, found in Corynebacterium diphtheriae (strain ATCC 700971 / NCTC 13129 / Biotype gravis).